Reading from the N-terminus, the 215-residue chain is uncharacterized protein (215 aa).

Catalysis depends on charge relay system residues Ser114, Asp162, and His194.

The protein belongs to the AB hydrolase superfamily. AB hydrolase 2 family.

This is an uncharacterized protein from Rickettsia prowazekii (strain Madrid E).